Consider the following 430-residue polypeptide: MTTLTLNTSLLSSCRILAAFSGGLDSTVLLHQLVLWRERHPDVTLRAIHIHHGLSPHADSWVRHCETVCERWQVPLVVERVTLADNGLGIEAHAREARYRAFAQTLLPGEVLATAQHLDDQCETFLLALKRGSGPAGLSAMGERSPFAGTLLLRPLLRETRKTLEQWAVRHGLCWIEDESNQDDAYDRNFLRLRALPLLQQRWPHFPAAVARSATLCAEQERLLDELLASDLTDCITAEGTLRLSPLMSMSDVRRAAILRRWLAMRNAPMPSRDALERIWQEVALARDDASPCLRFGDREIRRYQSQLWWIKSVAGQHETTVAWPVWQTPLALPAGLGTVQLVPGGELRRPREEESVSIRFKAPGVLHIVGRNGGRKLKKIWQEQGIPPWRRDTTPLLFYGETLIAAAGVFVTREGAAEDKEGVSLVWHA.

21–26 (SGGLDS) is an ATP binding site.

It belongs to the tRNA(Ile)-lysidine synthase family.

It is found in the cytoplasm. The enzyme catalyses cytidine(34) in tRNA(Ile2) + L-lysine + ATP = lysidine(34) in tRNA(Ile2) + AMP + diphosphate + H(+). In terms of biological role, ligates lysine onto the cytidine present at position 34 of the AUA codon-specific tRNA(Ile) that contains the anticodon CAU, in an ATP-dependent manner. Cytidine is converted to lysidine, thus changing the amino acid specificity of the tRNA from methionine to isoleucine. This Salmonella newport (strain SL254) protein is tRNA(Ile)-lysidine synthase.